The following is a 434-amino-acid chain: Trigger factor (434 aa).

The 86-residue stretch at 161–246 (EDRVTVDFSG…LKKVEERELP (86 aa)) folds into the PPIase FKBP-type domain.

The protein belongs to the FKBP-type PPIase family. Tig subfamily.

Its subcellular location is the cytoplasm. It catalyses the reaction [protein]-peptidylproline (omega=180) = [protein]-peptidylproline (omega=0). In terms of biological role, involved in protein export. Acts as a chaperone by maintaining the newly synthesized protein in an open conformation. Functions as a peptidyl-prolyl cis-trans isomerase. The chain is Trigger factor from Serratia proteamaculans (strain 568).